The chain runs to 405 residues: MSELLATYILADPGCDAEKRAEQIAIGLTVGSWTDLPLLKQEQLKKHKGRVVNVEETESELGEKQATVTIAYPEANFTNDIPAVLTTVFGKLSLDGKIKLADLEFSRSFKQSLPGPKFGVYGIRKKIGEFERPLLMSIFKGVIGRDMEDLKEQLRQQALGGVDLIKDDEILFETGSAPFEKRITEGKKVLEEAFEETGRKTLYAVNLTGRTMELKAKARKAAELGADVLLLNVFAYGLDVLQSFAEDDDIPLPIMAHPAVSGALTSSPHYGFSHSLLLGKLNRYAGADFSLFPSPYGSVALPKRDALAIYDECTKEDVFKPTFAVPSAGIHPGMVPLLMKDFGIDHIINAGGGIHGHPNGAAGGGRAFRAVIDAVLEAEPVEEKAKRSPDLKLALEKWGRVEVSV.

K91 serves as the catalytic Proton acceptor. Substrate is bound by residues K140, 166–169 (KDDE), H257, G329, and 351–352 (GG). Mg(2+)-binding residues include K166, D168, and E169. K166 is subject to N6-carboxylysine.

This sequence belongs to the RuBisCO large chain family. Type IV subfamily. In terms of assembly, homodimer. It depends on Mg(2+) as a cofactor.

It catalyses the reaction 5-methylsulfanyl-2,3-dioxopentyl phosphate = 2-hydroxy-5-methylsulfanyl-3-oxopent-1-enyl phosphate. It functions in the pathway amino-acid biosynthesis; L-methionine biosynthesis via salvage pathway; L-methionine from S-methyl-5-thio-alpha-D-ribose 1-phosphate: step 3/6. Functionally, catalyzes the enolization of 2,3-diketo-5-methylthiopentyl-1-phosphate (DK-MTP-1-P) into 2-hydroxy-3-keto-5-methylthiopentenyl-1-phosphate (HK-MTPenyl-1-P). The sequence is that of 2,3-diketo-5-methylthiopentyl-1-phosphate enolase from Bacillus licheniformis (strain ATCC 14580 / DSM 13 / JCM 2505 / CCUG 7422 / NBRC 12200 / NCIMB 9375 / NCTC 10341 / NRRL NRS-1264 / Gibson 46).